Reading from the N-terminus, the 208-residue chain is MKLSDVQKRLQAPFPAHTVSWKPAAFNAERTRALLLAHVDARAVQDRLDAVCPDDWSFEMEVVSGAEVPTVKGRLTVLGVTREDIGEAPEGSMAAYKAAASDAMKRCAVQFGIGRYLYDLPKQWADWDDARRGPKHLPELPEWARPDHERTPGGAHLVQAMEQLRYELPEDLDLQREVYKHLKAALGSIHPVPTGPVPTNPVQGGRAA.

The protein belongs to the RAD52 family. Homooligomer composed of 8 to 10 subunits; probably arranged in a ring-structure.

SsDNA-binding protein that contributes to the ionizing radiation resistance of D.radiodurans. Plays a role in DNA repair and genome reconstitution, in a RecA-independent process, since DdrA is essential for recovery from severe genomic fragmentation as a result of exposure to severe levels of ionizing radiation in an environment lacking nutrients. In vitro, binds to the 3'-ends of single-stranded DNA, protecting them from nuclease degradation. Thus, DdrA is part of a DNA end-protection system that helps to preserve genome integrity following irradiation or desiccation. Does not display DNA strand annealing activity, unlike eukaryotic Rad52 protein homologs. This chain is Single-stranded DNA-binding protein DdrA (ddrA), found in Deinococcus radiodurans (strain ATCC 13939 / DSM 20539 / JCM 16871 / CCUG 27074 / LMG 4051 / NBRC 15346 / NCIMB 9279 / VKM B-1422 / R1).